Consider the following 246-residue polypeptide: DNA-directed RNA polymerase subunit alpha (246 aa).

This sequence belongs to the RNA polymerase alpha chain family. In terms of assembly, in plastids the minimal PEP RNA polymerase catalytic core is composed of four subunits: alpha, beta, beta', and beta''. When a (nuclear-encoded) sigma factor is associated with the core the holoenzyme is formed, which can initiate transcription (Potential).

The protein localises to the plastid. The enzyme catalyses RNA(n) + a ribonucleoside 5'-triphosphate = RNA(n+1) + diphosphate. DNA-dependent RNA polymerase catalyzes the transcription of DNA into RNA using the four ribonucleoside triphosphates as substrates. This is DNA-directed RNA polymerase subunit alpha (rpoA) from Helicosporidium sp. subsp. Simulium jonesii (Green alga).